The sequence spans 614 residues: Male-specific lethal 1 homolog (614 aa).

Disordered stretches follow at residues Met-1–Pro-127 and Lys-147–Ser-217. A phosphoserine mark is found at Ser-66 and Ser-126. The segment covering Gly-158–Pro-169 has biased composition (low complexity). A compositionally biased stretch (pro residues) spans Ala-170 to Ala-184. Low complexity predominate over residues Pro-185–Ala-194. Ser-205 carries the phosphoserine modification. Residues Ser-213 to Leu-282 adopt a coiled-coil conformation. The segment at Lys-223–Gln-237 is interaction with MSL2. 2 stretches are compositionally biased toward basic and acidic residues: residues Lys-272–Lys-281 and Thr-294–Cys-304. Residues Lys-272 to Ile-420 are disordered. Lys-301 is covalently cross-linked (Glycyl lysine isopeptide (Lys-Gly) (interchain with G-Cter in SUMO2)). A Nuclear localization signal motif is present at residues Pro-317–Lys-346. Lys-353 bears the N6-acetyllysine mark. Residues Lys-365 and Lys-378 each participate in a glycyl lysine isopeptide (Lys-Gly) (interchain with G-Cter in SUMO2) cross-link. A compositionally biased stretch (basic and acidic residues) spans Val-376–Ser-392. Phosphoserine is present on Ser-393. The span at Ser-393 to Pro-407 shows a compositional bias: polar residues. Thr-396 is modified (phosphothreonine). Ser-442 carries the post-translational modification Phosphoserine. The 120-residue stretch at Val-472–Trp-591 folds into the PEHE domain. The interval Glu-496–Glu-514 is interaction with KAT8 HAT domain. The Bipartite nuclear localization signal motif lies at Lys-505–Arg-519. Positions Glu-550 to Trp-591 are sufficient for interaction with MSL3 MRG domain.

It belongs to the msl-1 family. In terms of assembly, component of a multisubunit histone acetyltransferase complex (MSL) at least composed of the KAT8/MOF/MYST1, MSL1/hampin, MSL2 and MSL3. Forms a MSL heterotetrameric core with MSL2. Interacts (via PEHE domain) with KAT8 (via HAT domain) and MSL3 (via MRG domain); both interactions are direct. Directly interacts with NUPR1. Interacts with TP53BP1; this interaction may be required for MSL1 DNA repair activity, but not for histone acetyltransferase activity. Interacts with TTC4, ECM2 and PIHD1. In terms of processing, sumoylated with SUMO1.

The protein resides in the nucleus. It localises to the nucleoplasm. It is found in the nucleus speckle. Non-catalytic component of the MSL histone acetyltransferase complex, a multiprotein complex that mediates the majority of histone H4 acetylation at 'Lys-16' (H4K16ac), an epigenetic mark that prevents chromatin compaction. The MSL complex is required for chromosome stability and genome integrity by maintaining homeostatic levels of H4K16ac. The MSL complex is also involved in gene dosage by promoting up-regulation of genes expressed by the X chromosome. X up-regulation is required to compensate for autosomal biallelic expression. The MSL complex also participates in gene dosage compensation by promoting expression of Tsix non-coding RNA. Within the MSL complex, acts as a scaffold to tether MSL3 and KAT8 together for enzymatic activity regulation. Greatly enhances MSL2 E3 ubiquitin ligase activity, promoting monoubiquitination of histone H2B at 'Lys-34' (H2BK34Ub). This modification in turn stimulates histone H3 methylation at 'Lys-4' (H3K4me) and 'Lys-79' (H3K79me) and leads to gene activation, including that of HOXA9 and MEIS1. The sequence is that of Male-specific lethal 1 homolog from Homo sapiens (Human).